Consider the following 440-residue polypeptide: Transposon Ty1-DR1 Gag polyprotein (440 aa).

Composition is skewed to polar residues over residues 1–10 (MESQQLSNYP), 48–60 (TKANSQQTTTPAS), and 127–152 (QSQFPQYPSSVGTPLSTPSPESGNTF). Disordered regions lie at residues 1 to 93 (MESQ…MMTQ), 126 to 173 (PQSQ…RPPP), and 352 to 440 (GSRN…PGTY). A compositionally biased stretch (low complexity) spans 153–165 (TDSSSADSDMTST). Residues 299-401 (NNGIHINNKV…NSKSKTARAH (103 aa)) form an RNA-binding region. Residues 402 to 418 (NVSTSNNSPSTDNDSIS) are compositionally biased toward low complexity. Ser416 bears the Phosphoserine mark. The segment covering 419 to 428 (KSTTEPIQLN) has biased composition (polar residues). Residues 429 to 440 (NKHDLHLRPGTY) are compositionally biased toward basic and acidic residues.

As to quaternary structure, homotrimer.

The protein resides in the cytoplasm. Capsid protein (CA) is the structural component of the virus-like particle (VLP), forming the shell that encapsulates the retrotransposons dimeric RNA genome. The particles are assembled from trimer-clustered units and there are holes in the capsid shells that allow for the diffusion of macromolecules. CA also has nucleocapsid-like chaperone activity, promoting primer tRNA(i)-Met annealing to the multipartite primer-binding site (PBS), dimerization of Ty1 RNA and initiation of reverse transcription. The polypeptide is Transposon Ty1-DR1 Gag polyprotein (TY1A-DR1) (Saccharomyces cerevisiae (strain ATCC 204508 / S288c) (Baker's yeast)).